Here is a 510-residue protein sequence, read N- to C-terminus: Bifunctional purine biosynthesis protein PurH (510 aa).

The 142-residue stretch at 1–142 folds into the MGS-like domain; it reads MRALLSVSDK…KNYKDVMVLC (142 aa).

This sequence belongs to the PurH family.

The catalysed reaction is (6R)-10-formyltetrahydrofolate + 5-amino-1-(5-phospho-beta-D-ribosyl)imidazole-4-carboxamide = 5-formamido-1-(5-phospho-D-ribosyl)imidazole-4-carboxamide + (6S)-5,6,7,8-tetrahydrofolate. It carries out the reaction IMP + H2O = 5-formamido-1-(5-phospho-D-ribosyl)imidazole-4-carboxamide. It functions in the pathway purine metabolism; IMP biosynthesis via de novo pathway; 5-formamido-1-(5-phospho-D-ribosyl)imidazole-4-carboxamide from 5-amino-1-(5-phospho-D-ribosyl)imidazole-4-carboxamide (10-formyl THF route): step 1/1. It participates in purine metabolism; IMP biosynthesis via de novo pathway; IMP from 5-formamido-1-(5-phospho-D-ribosyl)imidazole-4-carboxamide: step 1/1. The chain is Bifunctional purine biosynthesis protein PurH from Campylobacter jejuni subsp. jejuni serotype O:2 (strain ATCC 700819 / NCTC 11168).